Reading from the N-terminus, the 284-residue chain is Phosphatidylglycerol--prolipoprotein diacylglyceryl transferase (284 aa).

Helical transmembrane passes span 18–38 (LGGI…VIAF), 62–82 (YFLW…VLIY), 106–126 (FVGI…IASY), 136–156 (LLIY…FGRI), 190–210 (PSQL…VLWA), 218–238 (GLLI…AEFY), and 252–272 (LSMG…ILLY). Arginine 155 contributes to the a 1,2-diacyl-sn-glycero-3-phospho-(1'-sn-glycerol) binding site.

Belongs to the Lgt family.

The protein localises to the cell inner membrane. The enzyme catalyses L-cysteinyl-[prolipoprotein] + a 1,2-diacyl-sn-glycero-3-phospho-(1'-sn-glycerol) = an S-1,2-diacyl-sn-glyceryl-L-cysteinyl-[prolipoprotein] + sn-glycerol 1-phosphate + H(+). Its pathway is protein modification; lipoprotein biosynthesis (diacylglyceryl transfer). In terms of biological role, catalyzes the transfer of the diacylglyceryl group from phosphatidylglycerol to the sulfhydryl group of the N-terminal cysteine of a prolipoprotein, the first step in the formation of mature lipoproteins. This chain is Phosphatidylglycerol--prolipoprotein diacylglyceryl transferase, found in Helicobacter pylori (strain G27).